A 322-amino-acid polypeptide reads, in one-letter code: Acetyl-coenzyme A carboxylase carboxyl transferase subunit alpha (322 aa).

A CoA carboxyltransferase C-terminal domain is found at 30 to 293; it reads ALDISAEIAR…KQTLQESLRK (264 aa).

The protein belongs to the AccA family. Acetyl-CoA carboxylase is a heterohexamer composed of biotin carboxyl carrier protein (AccB), biotin carboxylase (AccC) and two subunits each of ACCase subunit alpha (AccA) and ACCase subunit beta (AccD).

The protein localises to the cytoplasm. It catalyses the reaction N(6)-carboxybiotinyl-L-lysyl-[protein] + acetyl-CoA = N(6)-biotinyl-L-lysyl-[protein] + malonyl-CoA. It functions in the pathway lipid metabolism; malonyl-CoA biosynthesis; malonyl-CoA from acetyl-CoA: step 1/1. Its function is as follows. Component of the acetyl coenzyme A carboxylase (ACC) complex. First, biotin carboxylase catalyzes the carboxylation of biotin on its carrier protein (BCCP) and then the CO(2) group is transferred by the carboxyltransferase to acetyl-CoA to form malonyl-CoA. In Nitrosomonas europaea (strain ATCC 19718 / CIP 103999 / KCTC 2705 / NBRC 14298), this protein is Acetyl-coenzyme A carboxylase carboxyl transferase subunit alpha.